A 275-amino-acid chain; its full sequence is N-(5'-phosphoribosyl)anthranilate isomerase 2, chloroplastic (275 aa).

The transit peptide at 1–32 (MSTGISTDLHVHFGALNFSKTYKSGLSNRTVS) directs the protein to the chloroplast.

Belongs to the TrpF family. In terms of tissue distribution, expressed in roots and shoots.

It is found in the plastid. It localises to the chloroplast. The catalysed reaction is N-(5-phospho-beta-D-ribosyl)anthranilate = 1-(2-carboxyphenylamino)-1-deoxy-D-ribulose 5-phosphate. The protein operates within amino-acid biosynthesis; L-tryptophan biosynthesis; L-tryptophan from chorismate: step 3/5. The chain is N-(5'-phosphoribosyl)anthranilate isomerase 2, chloroplastic (PAI2) from Arabidopsis thaliana (Mouse-ear cress).